The following is a 444-amino-acid chain: N-succinylarginine dihydrolase (444 aa).

Residues Ala19–Ser28, Asn110, and His137–Arg138 each bind substrate. Glu174 is a catalytic residue. Arg214 is a substrate binding site. His250 is an active-site residue. Residues Asp252 and Asn362 each coordinate substrate. The Nucleophile role is filled by Cys368.

The protein belongs to the succinylarginine dihydrolase family. In terms of assembly, homodimer.

The catalysed reaction is N(2)-succinyl-L-arginine + 2 H2O + 2 H(+) = N(2)-succinyl-L-ornithine + 2 NH4(+) + CO2. It functions in the pathway amino-acid degradation; L-arginine degradation via AST pathway; L-glutamate and succinate from L-arginine: step 2/5. In terms of biological role, catalyzes the hydrolysis of N(2)-succinylarginine into N(2)-succinylornithine, ammonia and CO(2). In Shewanella baltica (strain OS185), this protein is N-succinylarginine dihydrolase.